The primary structure comprises 372 residues: Queuine tRNA-ribosyltransferase (372 aa).

The Proton acceptor role is filled by aspartate 92. Substrate contacts are provided by residues 92–96, aspartate 146, glutamine 188, and glycine 215; that span reads DSGGY. The interval 246–252 is RNA binding; that stretch reads GIGSLKE. The active-site Nucleophile is the aspartate 265. The tract at residues 270 to 274 is RNA binding; important for wobble base 34 recognition; the sequence is TRLGR. Cysteine 303, cysteine 305, cysteine 308, and histidine 334 together coordinate Zn(2+).

Belongs to the queuine tRNA-ribosyltransferase family. Homodimer. Within each dimer, one monomer is responsible for RNA recognition and catalysis, while the other monomer binds to the replacement base PreQ1. Zn(2+) serves as cofactor.

It carries out the reaction 7-aminomethyl-7-carbaguanine + guanosine(34) in tRNA = 7-aminomethyl-7-carbaguanosine(34) in tRNA + guanine. It functions in the pathway tRNA modification; tRNA-queuosine biosynthesis. Its function is as follows. Catalyzes the base-exchange of a guanine (G) residue with the queuine precursor 7-aminomethyl-7-deazaguanine (PreQ1) at position 34 (anticodon wobble position) in tRNAs with GU(N) anticodons (tRNA-Asp, -Asn, -His and -Tyr). Catalysis occurs through a double-displacement mechanism. The nucleophile active site attacks the C1' of nucleotide 34 to detach the guanine base from the RNA, forming a covalent enzyme-RNA intermediate. The proton acceptor active site deprotonates the incoming PreQ1, allowing a nucleophilic attack on the C1' of the ribose to form the product. After dissociation, two additional enzymatic reactions on the tRNA convert PreQ1 to queuine (Q), resulting in the hypermodified nucleoside queuosine (7-(((4,5-cis-dihydroxy-2-cyclopenten-1-yl)amino)methyl)-7-deazaguanosine). This chain is Queuine tRNA-ribosyltransferase, found in Prochlorococcus marinus (strain AS9601).